We begin with the raw amino-acid sequence, 341 residues long: Glycerol-3-phosphate dehydrogenase [NAD(P)+] (341 aa).

Ser14, Phe15, Arg35, and Lys108 together coordinate NADPH. The sn-glycerol 3-phosphate site is built by Lys108 and Gly136. Ala140 contacts NADPH. Residues Lys191, Asp244, Ser254, Arg255, and Asn256 each contribute to the sn-glycerol 3-phosphate site. The active-site Proton acceptor is the Lys191. Arg255 serves as a coordination point for NADPH. The NADPH site is built by Val279 and Glu281.

Belongs to the NAD-dependent glycerol-3-phosphate dehydrogenase family.

It is found in the cytoplasm. It carries out the reaction sn-glycerol 3-phosphate + NAD(+) = dihydroxyacetone phosphate + NADH + H(+). It catalyses the reaction sn-glycerol 3-phosphate + NADP(+) = dihydroxyacetone phosphate + NADPH + H(+). The protein operates within membrane lipid metabolism; glycerophospholipid metabolism. Functionally, catalyzes the reduction of the glycolytic intermediate dihydroxyacetone phosphate (DHAP) to sn-glycerol 3-phosphate (G3P), the key precursor for phospholipid synthesis. This chain is Glycerol-3-phosphate dehydrogenase [NAD(P)+], found in Pseudomonas syringae pv. syringae (strain B728a).